The following is a 364-amino-acid chain: Uroporphyrinogen decarboxylase (364 aa).

Residues 28 to 32, Asp-78, Tyr-160, Thr-215, and His-333 each bind substrate; that span reads RQAGR.

This sequence belongs to the uroporphyrinogen decarboxylase family. As to quaternary structure, homodimer.

It is found in the cytoplasm. The enzyme catalyses uroporphyrinogen III + 4 H(+) = coproporphyrinogen III + 4 CO2. The protein operates within porphyrin-containing compound metabolism; protoporphyrin-IX biosynthesis; coproporphyrinogen-III from 5-aminolevulinate: step 4/4. Catalyzes the decarboxylation of four acetate groups of uroporphyrinogen-III to yield coproporphyrinogen-III. The protein is Uroporphyrinogen decarboxylase of Burkholderia mallei (strain NCTC 10247).